Here is a 68-residue protein sequence, read N- to C-terminus: Large ribosomal subunit protein uL29 (68 aa).

It belongs to the universal ribosomal protein uL29 family.

This Streptococcus uberis (strain ATCC BAA-854 / 0140J) protein is Large ribosomal subunit protein uL29.